Here is a 222-residue protein sequence, read N- to C-terminus: Adenylate kinase (222 aa).

An ATP-binding site is contributed by 10 to 15; that stretch reads GAGKGT. Residues 30–59 form an NMP region; that stretch reads STGDMLRAAVKAGTPLGIEAKKVMDAGGLV. AMP is bound by residues Thr31, Arg36, 57-59, 85-88, and Gln92; these read GLV and GFPR. The LID stretch occupies residues 122–159; it reads GRRVHVASGRTYHVKYNPPKNEGQDDETGDPLIQRDDD. Residues Arg123 and 132-133 each bind ATP; that span reads TY. The segment at 135-162 is disordered; sequence VKYNPPKNEGQDDETGDPLIQRDDDKEE. Residues Arg156 and Arg167 each coordinate AMP. Gly207 is an ATP binding site.

This sequence belongs to the adenylate kinase family. Monomer.

The protein localises to the cytoplasm. The catalysed reaction is AMP + ATP = 2 ADP. Its pathway is purine metabolism; AMP biosynthesis via salvage pathway; AMP from ADP: step 1/1. Catalyzes the reversible transfer of the terminal phosphate group between ATP and AMP. Plays an important role in cellular energy homeostasis and in adenine nucleotide metabolism. This chain is Adenylate kinase, found in Ralstonia nicotianae (strain ATCC BAA-1114 / GMI1000) (Ralstonia solanacearum).